We begin with the raw amino-acid sequence, 488 residues long: Katanin p60 ATPase-containing subunit A-like 1 (488 aa).

Methionine 1 bears the N-acetylmethionine mark. Positions 95-179 are disordered; that stretch reads DPAVWPPPVP…GASDSEIPKF (85 aa). Residues 116–127 are compositionally biased toward basic and acidic residues; that stretch reads PNREVRPLRKDV. Low complexity predominate over residues 128 to 138; it reads GAGARGLVGRA. A compositionally biased stretch (basic and acidic residues) spans 142-167; that stretch reads SKSDKPASRDKDYRARGRDDKARKNV. Serine 172 is subject to Phosphoserine. 246–253 provides a ligand contact to ATP; it reads GPPGTGKT.

Belongs to the AAA ATPase family. Katanin p60 subunit A1 subfamily. A-like 1 sub-subfamily. Interacts with KATNB1 and KATNBL1. In terms of tissue distribution, widely expressed, including in testis, brain, heart, lung, kidney, liver, spleen, seminal vesicles and ovary. In testis, restricted to Sertoli cells within the seminiferous epithelium (at protein level).

It localises to the cytoplasm. Its subcellular location is the cytoskeleton. The protein resides in the spindle pole. It is found in the spindle. It carries out the reaction n ATP + n H2O + a microtubule = n ADP + n phosphate + (n+1) alpha/beta tubulin heterodimers.. Its function is as follows. Regulates microtubule dynamics in Sertoli cells, a process that is essential for spermiogenesis and male fertility. Severs microtubules in an ATP-dependent manner, promoting rapid reorganization of cellular microtubule arrays. Has microtubule-severing activity in vitro. The polypeptide is Katanin p60 ATPase-containing subunit A-like 1 (Katnal1) (Mus musculus (Mouse)).